Reading from the N-terminus, the 410-residue chain is MTPDSSPSSVDDPLFESGHRIFANKDLLKIGHVPEADRIVGRDEEISKLAKRLNGAVHGYSPENVMIYGKTGTGKSLVSKHVCQRAQNAAQDGVEIGTAYIDCAEDNTETQAISSLAAKLNDESSTGISVPHTGLSTSKYYKLLWKTLDAQFDSVIIILDEIDLMNDDSVLMKLSRAEEAGKIDCSVGVIAISNKIQYVDNVNERVKSSFQHKELFFKPYDANQLREIMFNREDAFQDGVLSEDVIPLSAAFAAQEHGDARKAIDILRHAGEVAYEAGAELVTEEHVRQAQQHAEKDRFRELVNGAPTQAKAALLALTELSVNSNDDAFLTSRVYDQYEHICNHLDMDILSVRRFRDILKEQAFLGVVEIEKINKGSAGGIHLQNRLIEDSQVVRETILEDSRMQDWTRE.

ATP is bound by residues Thr-73–Leu-77, Tyr-220, and Arg-232.

This sequence belongs to the CDC6/cdc18 family.

Involved in regulation of DNA replication. This Halobacterium salinarum (strain ATCC 700922 / JCM 11081 / NRC-1) (Halobacterium halobium) protein is ORC1-type DNA replication protein 4 (orc4).